Here is a 436-residue protein sequence, read N- to C-terminus: GTPase Der (436 aa).

EngA-type G domains are found at residues 4–167 (PVIA…PKIE) and 176–351 (IRFS…ESHS). GTP is bound by residues 10-17 (GRPNVGKS), 57-61 (DTGGI), 119-122 (NKVD), 182-189 (GRPNVGKS), 229-233 (DTAGM), and 294-297 (NKWD). In terms of domain architecture, KH-like spans 352–436 (IRIQTNVLND…PIHIIARARD (85 aa)).

This sequence belongs to the TRAFAC class TrmE-Era-EngA-EngB-Septin-like GTPase superfamily. EngA (Der) GTPase family. In terms of assembly, associates with the 50S ribosomal subunit.

Its function is as follows. GTPase that plays an essential role in the late steps of ribosome biogenesis. The polypeptide is GTPase Der (Bacillus anthracis (strain A0248)).